The following is a 281-amino-acid chain: 4-deoxy-L-threo-5-hexosulose-uronate ketol-isomerase (281 aa).

Zn(2+) contacts are provided by His198, His200, Glu205, and His248.

The protein belongs to the KduI family. The cofactor is Zn(2+).

It catalyses the reaction 5-dehydro-4-deoxy-D-glucuronate = 3-deoxy-D-glycero-2,5-hexodiulosonate. It functions in the pathway glycan metabolism; pectin degradation; 2-dehydro-3-deoxy-D-gluconate from pectin: step 4/5. Its function is as follows. Catalyzes the isomerization of 5-dehydro-4-deoxy-D-glucuronate to 3-deoxy-D-glycero-2,5-hexodiulosonate. This Lacticaseibacillus paracasei (strain ATCC 334 / BCRC 17002 / CCUG 31169 / CIP 107868 / KCTC 3260 / NRRL B-441) (Lactobacillus paracasei) protein is 4-deoxy-L-threo-5-hexosulose-uronate ketol-isomerase.